We begin with the raw amino-acid sequence, 265 residues long: Indole-3-glycerol phosphate synthase (265 aa).

The protein belongs to the TrpC family.

The catalysed reaction is 1-(2-carboxyphenylamino)-1-deoxy-D-ribulose 5-phosphate + H(+) = (1S,2R)-1-C-(indol-3-yl)glycerol 3-phosphate + CO2 + H2O. The protein operates within amino-acid biosynthesis; L-tryptophan biosynthesis; L-tryptophan from chorismate: step 4/5. This chain is Indole-3-glycerol phosphate synthase, found in Syntrophobacter fumaroxidans (strain DSM 10017 / MPOB).